The sequence spans 1714 residues: Intersectin-1 (1714 aa).

Residues 21–109 enclose the EH 1 domain; that stretch reads ERAKHDQQFL…PVMKQQPVAI (89 aa). The 36-residue stretch at 53–88 folds into the EF-hand 1 domain; sequence LPQPVLAQIWALADMNNDGRMDQVEFSIAMKLIKLK. The Ca(2+) site is built by Asp-66, Asn-68, Asp-70, Arg-72, and Glu-77. Phosphoserine is present on Ser-203. Residues 221-310 form the EH 2 domain; that stretch reads SRLKYRQLFN…PEYIPPSFRR (90 aa). An EF-hand 2 domain is found at 254-289; that stretch reads LPQAQLASIWNLSDIDQDGKLTAEEFILAMHLIDVA. Residues Asp-267, Asp-269, Asp-271, Lys-273, and Glu-278 each contribute to the Ca(2+) site. The span at 310–325 shows a compositional bias: low complexity; it reads RVRSGSGMSVISSSSV. Disordered stretches follow at residues 310-356 and 614-706; these read RVRS…KREN and SKQQ…QSRL. Residues Ser-318, Ser-334, and Ser-335 each carry the phosphoserine modification. Positions 326–702 are KLERQ; sequence DQRLPEEPSS…ERAKPEMQDK (377 aa). Composition is skewed to basic and acidic residues over residues 340-356 and 622-706; these read QPEK…KREN and RSLE…QSRL. The stretch at 354–658 forms a coiled coil; sequence RENFERGSVE…QRRVQERDKQ (305 aa). Residue Ser-685 is modified to Phosphoserine. One can recognise an SH3 1 domain in the interval 738 to 799; it reads VKVVYYRALY…PANYAEKIPE (62 aa). The disordered stretch occupies residues 827–863; sequence APLPVTSSEPSTTPNNWADFSSTWPSSSNEKPETDNW. Residues 831 to 855 show a composition bias toward polar residues; sequence VTSSEPSTTPNNWADFSSTWPSSSN. Thr-890 bears the Phosphothreonine mark. Ser-894, Ser-895, and Ser-897 each carry phosphoserine. The SH3 2 domain occupies 906–964; that stretch reads VEGLQAQALYPWRAKKDNHLNFNKSDVITVLEQQDMWWFGEVQGQKGWFPKSYVKLISG. At Ser-971 the chain carries Phosphoserine. Thr-977 carries the phosphothreonine modification. 2 positions are modified to phosphoserine: Ser-979 and Ser-988. SH3 domains follow at residues 995-1053 and 1067-1131; these read IPGE…LKDS and KKPE…LLSP. Positions 1067-1131 are required for interaction with FCHSD2; sequence KKPEIAQVIA…PANYVKLLSP (65 aa). The Bipartite nuclear localization signal; in isoform 2 motif lies at 1097–1120; the sequence is RKKNPGGWWEGELQARGKKRQIGW. Ser-1130 carries the phosphoserine modification. A Phosphothreonine modification is found at Thr-1137. Residues 1148–1207 form the SH3 5 domain; that stretch reads PAVCQVIGMYDYTAQNDDELAFSKGQIINVLNKEDPDWWKGEVSGQVGLFPSNYVKLTTD. One can recognise a DH domain in the interval 1230 to 1416; it reads KRQGYIHELI…EELCSQVNEG (187 aa). A PH domain is found at 1455–1564; it reads KFLHSGKLYK…WVQKIKAASE (110 aa). The 117-residue stretch at 1572–1688 folds into the C2 domain; it reads KKREKAYLVR…KKDQGSKGPV (117 aa). Residue Ser-1638 is modified to Phosphoserine. Ca(2+) is bound by residues Asp-1660, Ser-1663, and Asp-1666.

As to quaternary structure, interacts (via DH domain) with CDC42. Interacts (via SH3 domain 1) with WASL. Interacts with dynamin, SNAP25 and SNAP23. Interacts with clathrin-associated proteins and other components of the endocytic machinery, such as SPIN90, EPS15, EPN1, EPN2, STON2, FCHO1, FCHO2 and DAB2. Interacts (via SH3 domains) with REPS1 and SGIP1. Interacts with ARHGAP31. Interacts with ADAM15. Interacts with PRRT2. Interacts (via SH3 domain 4) with FCHSD2 (via SH3 domain 2). Interacts (via SH3 domain 1) with DENND2B. Interacts (via SH3 domains) with CBL. Isoform 2: Interacts with CBL and DNM1. Isoform 2: Interacts with LMNA. Isoform 2: Interacts with importin subunit KPNA1; this is likely to mediate its import into the nucleus. Interacts with DNM2. Ca(2+) serves as cofactor. In terms of tissue distribution, detected in brain, adrenal gland and heart. Detected in neurons at the calyx of Held (at protein level). Isoform 1: Primarily detected in brain neurons. Isoform 2: Primarily detected in glia (at protein level). Widely expressed. Expressed at high levels in brain, heart and skeletal muscle.

It localises to the endomembrane system. It is found in the synapse. The protein localises to the synaptosome. Its subcellular location is the cell projection. The protein resides in the lamellipodium. It localises to the cell membrane. It is found in the membrane. The protein localises to the clathrin-coated pit. Its subcellular location is the recycling endosome. The protein resides in the endosome. It localises to the cytoplasmic vesicle. It is found in the cytoplasm. The protein localises to the nucleus envelope. Adapter protein that provides a link between the endocytic membrane traffic and the actin assembly machinery. Acts as a guanine nucleotide exchange factor (GEF) for CDC42, and thereby stimulates actin nucleation mediated by WASL and the ARP2/3 complex. Plays a role in the assembly and maturation of clathrin-coated vesicles. Recruits FCHSD2 to clathrin-coated pits. Involved in endocytosis of activated EGFR, and probably also other growth factor receptors. Involved in endocytosis of integrin beta-1 (ITGB1) and transferrin receptor (TFR); internalization of ITGB1 as DAB2-dependent cargo but not TFR may involve association with DAB2. Promotes ubiquitination and subsequent degradation of EGFR, and thereby contributes to the down-regulation of EGFR-dependent signaling pathways. In chromaffin cells, required for normal exocytosis of catecholamines. Required for rapid replenishment of release-ready synaptic vesicles at presynaptic active zones. Inhibits ARHGAP31 activity toward RAC1. Its function is as follows. Plays a role in synaptic vesicle endocytosis in brain neurons. The sequence is that of Intersectin-1 from Mus musculus (Mouse).